A 338-amino-acid polypeptide reads, in one-letter code: Secretory carrier-associated membrane protein 1 (338 aa).

The disordered stretch occupies residues 1-63 (MSDFDSNPFA…PNVPSTQPAI (63 aa)). S2 bears the N-acetylserine mark. At S2 the chain carries Phosphoserine. Residues 2–155 (SDFDSNPFAD…QKTVKIMYYL (154 aa)) lie on the Cytoplasmic side of the membrane. T45 carries the post-translational modification Phosphothreonine. A helical membrane pass occupies residues 156 to 176 (WMFHAVTLFLNIFGCLAWFCV). Residues 177–181 (DPSRG) are Lumenal-facing. A helical transmembrane segment spans residues 182 to 202 (VDFGLSILWFLLFTPCSFVCW). At 203–217 (YRPLYGAFRSDSSFR) the chain is on the cytoplasmic side. Residues 218–238 (FFVFFFVYICQFAVHVLQAAG) form a helical membrane-spanning segment. At 239 to 261 (FHNWGNCGWISSLTGLNQSIPVG) the chain is on the lumenal side. The chain crosses the membrane as a helical span at residues 262-282 (IMMIIIAALFTASAVISLVMF). The Cytoplasmic portion of the chain corresponds to 283-338 (KKVHGLYRTTGASFEKAQQEFATGVMSNKTVQTAAANAASTAATSAAQNAFKGNQI).

This sequence belongs to the SCAMP family. Interacts with SYNRG, ITSN1 and SLC9A7.

It localises to the golgi apparatus. It is found in the trans-Golgi network membrane. The protein resides in the recycling endosome membrane. In terms of biological role, functions in post-Golgi recycling pathways. Acts as a recycling carrier to the cell surface. The sequence is that of Secretory carrier-associated membrane protein 1 (SCAMP1) from Sus scrofa (Pig).